A 188-amino-acid polypeptide reads, in one-letter code: Accessory gene regulator protein B (188 aa).

4 helical membrane passes run 49–69 (VALL…YFFV), 82–102 (LLCH…IVHF), 104–124 (VSWT…ICYA), and 163–183 (YMQL…PIFF).

Belongs to the AgrB family.

Its subcellular location is the cell membrane. Its function is as follows. Essential for the production of a quorum sensing system signal molecule, the autoinducing peptide (AIP). This quorum sensing system is responsible for the regulation of the expression of virulence factor genes. Involved in the proteolytic processing of AgrD, the precursor of AIP. This Staphylococcus lugdunensis protein is Accessory gene regulator protein B.